The chain runs to 728 residues: Glutamate--cysteine ligase (728 aa).

Positions 517-552 (PVRTTRRGGSASRSASGTSTPNSGSSRPATPPLGPV) are disordered. Residues 523–536 (RGGSASRSASGTST) show a composition bias toward low complexity.

Belongs to the glutamate--cysteine ligase type 3 family.

The enzyme catalyses L-cysteine + L-glutamate + ATP = gamma-L-glutamyl-L-cysteine + ADP + phosphate + H(+). It functions in the pathway sulfur metabolism; glutathione biosynthesis; glutathione from L-cysteine and L-glutamate: step 1/2. This chain is Glutamate--cysteine ligase (gcs-1), found in Neurospora crassa (strain ATCC 24698 / 74-OR23-1A / CBS 708.71 / DSM 1257 / FGSC 987).